The primary structure comprises 622 residues: Palmitoyl-protein thioesterase-dolichyl pyrophosphate phosphatase fusion 1 (622 aa).

The signal sequence occupies residues 1–24 (MLSCSSFLIFFLFSWVLLPMKSFA). The Lumenal portion of the chain corresponds to 25-405 (IPIISLDKVR…NVSEEKGPKS (381 aa)). A disulfide bond links cysteine 106 and cysteine 138. The active site involves serine 125. Asparagine 223 carries N-linked (GlcNAc...) asparagine glycosylation. The active site involves aspartate 245. Residue asparagine 260 is glycosylated (N-linked (GlcNAc...) asparagine). Histidine 298 is an active-site residue. A glycan (N-linked (GlcNAc...) asparagine) is linked at asparagine 396. A helical transmembrane segment spans residues 406-426 (FANLAFITIFSHFFYHIDDMW). The Cytoplasmic segment spans residues 427-428 (RS). A helical transmembrane segment spans residues 429 to 449 (TLGLFSLIPQIIGIIYLTVMF). Topologically, residues 450 to 488 (TGRELDTFMQFGGQVVNEFINYVVKVSLKYPRPADIEYG) are lumenal. The chain crosses the membrane as a helical span at residues 489-511 (VGYGMPSSHSQFMGFFSAYMIAW). Residues 512–519 (DYKYRRSQ) are Cytoplasmic-facing. A helical membrane pass occupies residues 520 to 540 (CFSMLSFAKYAIYLTLSTFVC). The Lumenal segment spans residues 541 to 552 (SSRYLLDFHYLT). A helical transmembrane segment spans residues 553-573 (QVVYGYMIGFGVGLFWVYLVG). At 574–622 (KLRSLGVTKWLLSLPPLQFFYIKDTIPHSKDNHKRQWLESKQFKNQKSN) the chain is on the cytoplasmic side.

The protein in the N-terminal section; belongs to the palmitoyl-protein thioesterase family. In the C-terminal section; belongs to the dolichyldiphosphatase family. Proteolytically cleaved, possibly by krp1.

The protein localises to the vacuole. It localises to the endoplasmic reticulum membrane. The enzyme catalyses S-hexadecanoyl-L-cysteinyl-[protein] + H2O = L-cysteinyl-[protein] + hexadecanoate + H(+). It catalyses the reaction a di-trans,poly-cis-dolichyl diphosphate + H2O = a di-trans,poly-cis-dolichyl phosphate + phosphate + H(+). Functionally, essential protein. Removes thioester-linked fatty acyl groups such as palmitate from modified cysteine residues in proteins or peptides during vacuolar degradation. Required for efficient N-glycosylation. Necessary for maintaining optimal levels of dolichol-linked oligosaccharides. The chain is Palmitoyl-protein thioesterase-dolichyl pyrophosphate phosphatase fusion 1 (pdf1) from Schizosaccharomyces pombe (strain 972 / ATCC 24843) (Fission yeast).